Here is a 322-residue protein sequence, read N- to C-terminus: Tetraacyldisaccharide 4'-kinase (322 aa).

Position 54–61 (54–61 (SVGGTGKT)) interacts with ATP.

The protein belongs to the LpxK family.

It carries out the reaction a lipid A disaccharide + ATP = a lipid IVA + ADP + H(+). It participates in glycolipid biosynthesis; lipid IV(A) biosynthesis; lipid IV(A) from (3R)-3-hydroxytetradecanoyl-[acyl-carrier-protein] and UDP-N-acetyl-alpha-D-glucosamine: step 6/6. Functionally, transfers the gamma-phosphate of ATP to the 4'-position of a tetraacyldisaccharide 1-phosphate intermediate (termed DS-1-P) to form tetraacyldisaccharide 1,4'-bis-phosphate (lipid IVA). This Francisella tularensis subsp. tularensis (strain FSC 198) protein is Tetraacyldisaccharide 4'-kinase.